The following is a 443-amino-acid chain: Dynein regulatory complex protein 9 (443 aa).

2 disordered regions span residues 1–40 and 415–443; these read MEEDSQEDSNLPPKVWHSEMTVSVTGKPPSTVEEDGLPKE and GFKMPKDKVDSKDSKGKGKGKDKRRGKKK. The region spanning 393–422 is the IQ domain; that stretch reads ELKSVIKLQAWWRGTMIRREIGGFKMPKDK. Positions 415 to 430 are enriched in basic and acidic residues; the sequence is GFKMPKDKVDSKDSKG. The segment covering 431–443 has biased composition (basic residues); the sequence is KGKGKDKRRGKKK.

Belongs to the DRC9 family. As to quaternary structure, component of the nexin-dynein regulatory complex (N-DRC). Interacts (via IQ domain) with CALM when calcium levels are low. Does not interact with CALM in the presence of Ca(2+). Interacts with the HSP70 proteins HSPA1L and HSPA8. May form a complex with CAMK4 and HSP70.

The protein localises to the cytoplasm. Its subcellular location is the cell projection. It is found in the cilium. The protein resides in the flagellum. It localises to the cytoskeleton. The protein localises to the flagellum axoneme. Its function is as follows. Component of the nexin-dynein regulatory complex (N-DRC), a key regulator of ciliary/flagellar motility which maintains the alignment and integrity of the distal axoneme and regulates microtubule sliding in motile axonemes. Binds calmodulin when cellular Ca(2+) levels are low and thereby contributes to the regulation of calcium and calmodulin-dependent protein kinase IV (CAMK4) activity; contributes to the regulation of CAMK4 signaling cascades. Required for normal axoneme assembly in sperm flagella, normal sperm tail formation and for male fertility. This chain is Dynein regulatory complex protein 9 (IQCG), found in Macaca fascicularis (Crab-eating macaque).